The following is a 463-amino-acid chain: Putative WAS protein family homolog 3 (463 aa).

The required for WASH complex assembly stretch occupies residues 1 to 54 (MTPVRMQHSLAGQTYAVPLIQPDLRREEAVQQMADALQYLQKVSGDIFSRISQQ). The segment at 1–165 (MTPVRMQHSL…EGLGGLPSNI (165 aa)) is WHD1. Lys-218 is covalently cross-linked (Glycyl lysine isopeptide (Lys-Gly) (interchain with G-Cter in ubiquitin)). Residues 295 to 463 (QDGVLTPPPP…AEEDEDDWES (169 aa)) form a disordered region. Residues 300 to 312 (TPPPPPPPPPPAP) show a composition bias toward pro residues. The tract at residues 347–463 (QGAPREVVDP…AEEDEDDWES (117 aa)) is VCA. One can recognise a WH2 domain in the interval 359–381 (GRATLLESIRQAGGIGKAKLRSM). Residues 380 to 396 (SMKERKLEKKQQKEQEQ) show a composition bias toward basic and acidic residues. Residues 422 to 434 (SGKGPGAGEGPGG) show a composition bias toward gly residues. Acidic residues predominate over residues 454 to 463 (AEEDEDDWES).

Belongs to the WASH1 family. In terms of assembly, component of the WASH core complex also described as WASH regulatory complex (SHRC) composed of WASH (WASHC1, WASH2P or WASH3P), WASHC2 (WASHC2A or WASHC2C), WASHC3, WASHC4 and WASHC5. The WASH core complex associates with the F-actin-capping protein dimer (formed by CAPZA1, CAPZA2 or CAPZA3 and CAPZB) in a transient or substoichiometric manner which was initially described as WASH complex. Interacts (via WHD1 region) with WASHC2C; the interaction is direct. Interacts with alpha-tubulin. Interacts with BECN1; WASHC1 and AMBRA1 can competitively interact with BECN1. Interacts with BLOC1S2; may associate with the BLOC-1 complex. Interacts with tubulin gamma chain (TUBG1 or TUBG2). Interacts with EXOC1, EXOC4, EXOC8; in MMP14-positive endosomes in breast tumor cells; indicative for an association with the exocyst complex.

The protein localises to the early endosome. It is found in the early endosome membrane. The protein resides in the recycling endosome membrane. Its subcellular location is the cell projection. It localises to the lamellipodium. The protein localises to the filopodium. It is found in the cytoplasmic vesicle. The protein resides in the autophagosome. Its subcellular location is the cytoplasm. It localises to the cytoskeleton. The protein localises to the microtubule organizing center. It is found in the centrosome. The protein resides in the centriole. Acts as a nucleation-promoting factor at the surface of endosomes, where it recruits and activates the Arp2/3 complex to induce actin polymerization, playing a key role in the fission of tubules that serve as transport intermediates during endosome sorting. Involved in endocytic trafficking of EGF. Involved in transferrin receptor recycling. Regulates the trafficking of endosomal alpha5beta1 integrin to the plasma membrane and involved in invasive cell migration. In T-cells involved in endosome-to-membrane recycling of receptors including T-cell receptor (TCR), CD28 and ITGAL; proposed to be implicated in T cell proliferation and effector function. In dendritic cells involved in endosome-to-membrane recycling of major histocompatibility complex (MHC) class II probably involving retromer and subsequently allowing antigen sampling, loading and presentation during T-cell activation. Involved in Arp2/3 complex-dependent actin assembly driving Salmonella typhimurium invasion independent of ruffling. Involved in the exocytosis of MMP14 leading to matrix remodeling during invasive migration and implicating late endosome-to-plasma membrane tubular connections and cooperation with the exocyst complex. Involved in negative regulation of autophagy independently from its role in endosomal sorting by inhibiting BECN1 ubiquitination to inactivate PIK3C3/Vps34 activity. The sequence is that of Putative WAS protein family homolog 3 (WASH3P) from Homo sapiens (Human).